Here is a 525-residue protein sequence, read N- to C-terminus: Bifunctional enzyme NanE/NanK (525 aa).

A manNAc-6-P epimerase region spans residues methionine 1 to serine 241. The manNAc kinase stretch occupies residues serine 242–serine 525. ATP is bound by residues alanine 246–lysine 253 and glycine 372–leucine 379.

The protein in the N-terminal section; belongs to the NanE family. In the C-terminal section; belongs to the ROK (NagC/XylR) family. NanK subfamily.

The catalysed reaction is an N-acyl-D-glucosamine 6-phosphate = an N-acyl-D-mannosamine 6-phosphate. It carries out the reaction an N-acyl-D-mannosamine + ATP = an N-acyl-D-mannosamine 6-phosphate + ADP + H(+). It functions in the pathway amino-sugar metabolism; N-acetylneuraminate degradation; D-fructose 6-phosphate from N-acetylneuraminate: step 2/5. The protein operates within amino-sugar metabolism; N-acetylneuraminate degradation; D-fructose 6-phosphate from N-acetylneuraminate: step 3/5. Functionally, converts N-acetylmannosamine-6-phosphate (ManNAc-6-P) to N-acetylglucosamine-6-phosphate (GlcNAc-6-P). Its function is as follows. Catalyzes the phosphorylation of N-acetylmannosamine (ManNAc) to ManNAc-6-P. This Brucella suis biovar 1 (strain 1330) protein is Bifunctional enzyme NanE/NanK (nanEK).